Reading from the N-terminus, the 189-residue chain is Auxin-responsive protein IAA6 (189 aa).

Residues 13–17 (LRLGL) carry the EAR-like (transcriptional repression) motif. A PB1 domain is found at 93-178 (IGYVKVSMDG…SCKRLRIVKR (86 aa)).

This sequence belongs to the Aux/IAA family. As to quaternary structure, homodimers and heterodimers. Interacts with TPL. In terms of tissue distribution, highly expressed in stems and flowers.

Its subcellular location is the nucleus. In terms of biological role, aux/IAA proteins are short-lived transcriptional factors that function as repressors of early auxin response genes at low auxin concentrations. Repression is thought to result from the interaction with auxin response factors (ARFs), proteins that bind to the auxin-responsive promoter element (AuxRE). Formation of heterodimers with ARF proteins may alter their ability to modulate early auxin response genes expression. The sequence is that of Auxin-responsive protein IAA6 (IAA6) from Arabidopsis thaliana (Mouse-ear cress).